A 94-amino-acid chain; its full sequence is Co-chaperonin GroES (94 aa).

The protein belongs to the GroES chaperonin family. In terms of assembly, heptamer of 7 subunits arranged in a ring. Interacts with the chaperonin GroEL.

The protein localises to the cytoplasm. In terms of biological role, together with the chaperonin GroEL, plays an essential role in assisting protein folding. The GroEL-GroES system forms a nano-cage that allows encapsulation of the non-native substrate proteins and provides a physical environment optimized to promote and accelerate protein folding. GroES binds to the apical surface of the GroEL ring, thereby capping the opening of the GroEL channel. The chain is Co-chaperonin GroES from Streptococcus pneumoniae (strain Taiwan19F-14).